A 433-amino-acid polypeptide reads, in one-letter code: 5-methylthioadenosine/S-adenosylhomocysteine deaminase (433 aa).

Residues His-67 and His-69 each coordinate Zn(2+). The substrate site is built by Glu-96, Arg-148, Arg-158, and His-186. His-213 is a Zn(2+) binding site. Residues Glu-216 and Asp-301 each coordinate substrate. Asp-301 is a Zn(2+) binding site.

It belongs to the metallo-dependent hydrolases superfamily. MTA/SAH deaminase family. It depends on Zn(2+) as a cofactor.

It catalyses the reaction S-adenosyl-L-homocysteine + H2O + H(+) = S-inosyl-L-homocysteine + NH4(+). The enzyme catalyses S-methyl-5'-thioadenosine + H2O + H(+) = S-methyl-5'-thioinosine + NH4(+). Its function is as follows. Catalyzes the deamination of 5-methylthioadenosine and S-adenosyl-L-homocysteine into 5-methylthioinosine and S-inosyl-L-homocysteine, respectively. Is also able to deaminate adenosine. The polypeptide is 5-methylthioadenosine/S-adenosylhomocysteine deaminase (Pelotomaculum thermopropionicum (strain DSM 13744 / JCM 10971 / SI)).